The chain runs to 83 residues: Cell division topological specificity factor (83 aa).

This sequence belongs to the MinE family.

Its function is as follows. Prevents the cell division inhibition by proteins MinC and MinD at internal division sites while permitting inhibition at polar sites. This ensures cell division at the proper site by restricting the formation of a division septum at the midpoint of the long axis of the cell. This is Cell division topological specificity factor from Alcanivorax borkumensis (strain ATCC 700651 / DSM 11573 / NCIMB 13689 / SK2).